A 290-amino-acid chain; its full sequence is 4-hydroxy-tetrahydrodipicolinate synthase (290 aa).

A pyruvate-binding site is contributed by Thr-44. Tyr-132 (proton donor/acceptor) is an active-site residue. The Schiff-base intermediate with substrate role is filled by Lys-160. Ile-202 serves as a coordination point for pyruvate.

The protein belongs to the DapA family. In terms of assembly, homotetramer; dimer of dimers.

It localises to the cytoplasm. It carries out the reaction L-aspartate 4-semialdehyde + pyruvate = (2S,4S)-4-hydroxy-2,3,4,5-tetrahydrodipicolinate + H2O + H(+). It functions in the pathway amino-acid biosynthesis; L-lysine biosynthesis via DAP pathway; (S)-tetrahydrodipicolinate from L-aspartate: step 3/4. In terms of biological role, catalyzes the condensation of (S)-aspartate-beta-semialdehyde [(S)-ASA] and pyruvate to 4-hydroxy-tetrahydrodipicolinate (HTPA). The chain is 4-hydroxy-tetrahydrodipicolinate synthase from Geobacter metallireducens (strain ATCC 53774 / DSM 7210 / GS-15).